The following is a 230-amino-acid chain: MMTKIKLLMLIIFYLIISASAHAAGGIALGATRIIYPADAKQTAVWIRNSHTNERFLVNSWIENSSGVKEKSFIITPPLFVSEPKSENTLRIIYTGPPLAADRESLFWMNVKTIPSVDKNALNGRNVLQLAILSRMKLFLRPIQLQELPAEAPDTLKFSRSGNYINVHNPSPFYVTLVNLQVGSQKLGNAMAAPRVNSQIPLPSGVQGKLKFQTVNDYGSVTPVREVNLN.

An N-terminal signal peptide occupies residues 1–23 (MMTKIKLLMLIIFYLIISASAHA).

The protein belongs to the periplasmic pilus chaperone family.

Its subcellular location is the periplasm. Part of the sfmACDHF fimbrial operon. Could contribute to adhesion to various surfaces in specific environmental niches. Increases adhesion to eukaryotic T24 bladder epithelial cells in the absence of fim genes. The protein is Probable fimbrial chaperone SfmC (sfmC) of Escherichia coli (strain K12).